We begin with the raw amino-acid sequence, 88 residues long: Sec-independent protein translocase protein TatA (88 aa).

The helical transmembrane segment at 1–21 (MGGISIWQLLIIAVIVVLLFG) threads the bilayer. Positions 41–88 (KAMGDENQKETNNAEKTTNDADFDTKNLAQKTSTEEKSTTESKNKEQV) are disordered. 2 stretches are compositionally biased toward basic and acidic residues: residues 42 to 65 (AMGDENQKETNNAEKTTNDADFDT) and 73 to 88 (STEEKSTTESKNKEQV).

The protein belongs to the TatA/E family. In terms of assembly, the Tat system comprises two distinct complexes: a TatABC complex, containing multiple copies of TatA, TatB and TatC subunits, and a separate TatA complex, containing only TatA subunits. Substrates initially bind to the TatABC complex, which probably triggers association of the separate TatA complex to form the active translocon.

It localises to the cell inner membrane. Functionally, part of the twin-arginine translocation (Tat) system that transports large folded proteins containing a characteristic twin-arginine motif in their signal peptide across membranes. TatA could form the protein-conducting channel of the Tat system. The protein is Sec-independent protein translocase protein TatA of Proteus mirabilis (strain HI4320).